The following is a 271-amino-acid chain: MNSKLSLSTKLSSNGKTQLAEYFAMPPFKVITLPSYDDAWANGLNAMQMSSSPGVLAGDLLEIDISLAKLTALSLNTQAFTRVQAMNEGDSAMQTTHILLAENSRLFYLPHPLVLHKDSVFKQKTLIEMDEQSELIYGEIVAIGRVLNDERFAFRQFSSHLKIYALQNDGKKRPLVSDCIQWLPSKMNLTALSQMENYSHQGSLTYLNLAKNNAEIKQQVQALQQQSAEEKDLLIGISQLNEYGLMVRVLGCRAEQIQKLFEKIGRLLKSV.

It belongs to the UreD family. UreD, UreF and UreG form a complex that acts as a GTP-hydrolysis-dependent molecular chaperone, activating the urease apoprotein by helping to assemble the nickel containing metallocenter of UreC. The UreE protein probably delivers the nickel.

The protein resides in the cytoplasm. Its function is as follows. Required for maturation of urease via the functional incorporation of the urease nickel metallocenter. This Haemophilus influenzae (strain PittGG) protein is Urease accessory protein UreD.